We begin with the raw amino-acid sequence, 532 residues long: Type 2 DNA topoisomerase 6 subunit B (532 aa).

Residues asparagine 41, aspartate 75, 96 to 97 (SK), 105 to 112 (GMYGLGVK), and lysine 427 contribute to the ATP site.

Belongs to the TOP6B family. Homodimer. Heterotetramer of two Top6A and two Top6B chains.

It carries out the reaction ATP-dependent breakage, passage and rejoining of double-stranded DNA.. In terms of biological role, relaxes both positive and negative superturns and exhibits a strong decatenase activity. This is Type 2 DNA topoisomerase 6 subunit B from Sulfurisphaera tokodaii (strain DSM 16993 / JCM 10545 / NBRC 100140 / 7) (Sulfolobus tokodaii).